Reading from the N-terminus, the 176-residue chain is Protein tyrosine phosphatase PRL-1 (176 aa).

Residues 13–165 form the Tyrosine-protein phosphatase domain; it reads GESDAVVFRF…YKPRHQEGNE (153 aa). Residues cysteine 52 and cysteine 107 are joined by a disulfide bond. The Proton donor role is filled by aspartate 75. Cysteine 107 acts as the Phosphocysteine intermediate in catalysis. 109 to 113 is a binding site for substrate; sequence AGLGR. At cysteine 173 the chain carries Cysteine methyl ester. The S-farnesyl cysteine moiety is linked to residue cysteine 173. A propeptide spans 174-176 (removed in mature form); it reads AVM.

It belongs to the protein-tyrosine phosphatase family.

It localises to the flagellar pocket. The catalysed reaction is O-phospho-L-tyrosyl-[protein] + H2O = L-tyrosyl-[protein] + phosphate. With respect to regulation, activated in a reduced environment which promotes the reduction of the disulfide bond between the regulatory Cys-52 and the catalytic Cys-107 residues. Inhibited by sodium orthovanadate. In terms of biological role, has protein tyrosine phosphatase activity. The protein is Protein tyrosine phosphatase PRL-1 of Trypanosoma cruzi (strain CL Brener).